The chain runs to 96 residues: Neutrophil defensin 8 (96 aa).

Residues 1-19 (MRTLVILAAILLVALQAQA) form the signal peptide. A propeptide spanning residues 20-66 (EPLQARTDEATAAQEQIPTDNPEVVVSLAWDESLAPKDSVPGLRKNM) is cleaved from the precursor. Disulfide bonds link C68–C96, C70–C85, and C75–C95.

The protein belongs to the alpha-defensin family.

The protein localises to the secreted. Its function is as follows. Probable antibiotic and antifungal activity. This chain is Neutrophil defensin 8, found in Macaca mulatta (Rhesus macaque).